Here is a 1422-residue protein sequence, read N- to C-terminus: DNA-directed RNA polymerase subunit beta (1422 aa).

The interval glutamine 1392–alanine 1422 is disordered.

Belongs to the RNA polymerase beta chain family. The RNAP catalytic core consists of 2 alpha, 1 beta, 1 beta' and 1 omega subunit. When a sigma factor is associated with the core the holoenzyme is formed, which can initiate transcription.

The catalysed reaction is RNA(n) + a ribonucleoside 5'-triphosphate = RNA(n+1) + diphosphate. Its function is as follows. DNA-dependent RNA polymerase catalyzes the transcription of DNA into RNA using the four ribonucleoside triphosphates as substrates. The polypeptide is DNA-directed RNA polymerase subunit beta (Anaeromyxobacter dehalogenans (strain 2CP-1 / ATCC BAA-258)).